The chain runs to 698 residues: Elongation factor G (698 aa).

In terms of domain architecture, tr-type G spans 8–290 (ERYRNIGISA…AVIELLPSPV (283 aa)). Residues 17–24 (AHIDAGKT), 88–92 (DTPGH), and 142–145 (NKMD) each bind GTP.

This sequence belongs to the TRAFAC class translation factor GTPase superfamily. Classic translation factor GTPase family. EF-G/EF-2 subfamily.

It is found in the cytoplasm. Its function is as follows. Catalyzes the GTP-dependent ribosomal translocation step during translation elongation. During this step, the ribosome changes from the pre-translocational (PRE) to the post-translocational (POST) state as the newly formed A-site-bound peptidyl-tRNA and P-site-bound deacylated tRNA move to the P and E sites, respectively. Catalyzes the coordinated movement of the two tRNA molecules, the mRNA and conformational changes in the ribosome. The protein is Elongation factor G of Aromatoleum aromaticum (strain DSM 19018 / LMG 30748 / EbN1) (Azoarcus sp. (strain EbN1)).